The chain runs to 160 residues: Nucleotide-binding protein Noc_2254 (160 aa).

Belongs to the YajQ family.

Nucleotide-binding protein. This is Nucleotide-binding protein Noc_2254 from Nitrosococcus oceani (strain ATCC 19707 / BCRC 17464 / JCM 30415 / NCIMB 11848 / C-107).